Consider the following 159-residue polypeptide: Phosphopantetheine adenylyltransferase (159 aa).

Threonine 10 lines the substrate pocket. ATP-binding positions include 10–11 and histidine 18; that span reads TF. 3 residues coordinate substrate: lysine 42, methionine 74, and arginine 88. Residues 89–91, glutamate 99, and 124–130 contribute to the ATP site; these read GLR and WSFISSS.

Belongs to the bacterial CoaD family. As to quaternary structure, homohexamer. Requires Mg(2+) as cofactor.

It localises to the cytoplasm. It catalyses the reaction (R)-4'-phosphopantetheine + ATP + H(+) = 3'-dephospho-CoA + diphosphate. It functions in the pathway cofactor biosynthesis; coenzyme A biosynthesis; CoA from (R)-pantothenate: step 4/5. Functionally, reversibly transfers an adenylyl group from ATP to 4'-phosphopantetheine, yielding dephospho-CoA (dPCoA) and pyrophosphate. The protein is Phosphopantetheine adenylyltransferase of Escherichia fergusonii (strain ATCC 35469 / DSM 13698 / CCUG 18766 / IAM 14443 / JCM 21226 / LMG 7866 / NBRC 102419 / NCTC 12128 / CDC 0568-73).